A 202-amino-acid chain; its full sequence is Imidazoleglycerol-phosphate dehydratase (202 aa).

The protein belongs to the imidazoleglycerol-phosphate dehydratase family.

It localises to the cytoplasm. The enzyme catalyses D-erythro-1-(imidazol-4-yl)glycerol 3-phosphate = 3-(imidazol-4-yl)-2-oxopropyl phosphate + H2O. The protein operates within amino-acid biosynthesis; L-histidine biosynthesis; L-histidine from 5-phospho-alpha-D-ribose 1-diphosphate: step 6/9. The protein is Imidazoleglycerol-phosphate dehydratase of Clavibacter michiganensis subsp. michiganensis (strain NCPPB 382).